A 36-amino-acid chain; its full sequence is Photosystem II reaction center protein M (36 aa).

The chain crosses the membrane as a helical span at residues Gly-7–Ile-27.

This sequence belongs to the PsbM family. As to quaternary structure, PSII is composed of 1 copy each of membrane proteins PsbA, PsbB, PsbC, PsbD, PsbE, PsbF, PsbH, PsbI, PsbJ, PsbK, PsbL, PsbM, PsbT, PsbX, PsbY, PsbZ, Psb30/Ycf12, peripheral proteins PsbO, CyanoQ (PsbQ), PsbU, PsbV and a large number of cofactors. It forms dimeric complexes.

Its subcellular location is the cellular thylakoid membrane. One of the components of the core complex of photosystem II (PSII). PSII is a light-driven water:plastoquinone oxidoreductase that uses light energy to abstract electrons from H(2)O, generating O(2) and a proton gradient subsequently used for ATP formation. It consists of a core antenna complex that captures photons, and an electron transfer chain that converts photonic excitation into a charge separation. This subunit is found at the monomer-monomer interface. This Synechococcus sp. (strain CC9311) protein is Photosystem II reaction center protein M.